The primary structure comprises 271 residues: Type III pantothenate kinase (271 aa).

Residue 6–13 coordinates ATP; it reads DVRNTNIV. 109–112 contacts substrate; the sequence is GADR. The active-site Proton acceptor is aspartate 111. Position 131 (aspartate 131) interacts with K(+). Threonine 134 contacts ATP. Threonine 186 contributes to the substrate binding site.

It belongs to the type III pantothenate kinase family. Homodimer. NH4(+) is required as a cofactor. K(+) serves as cofactor.

The protein resides in the cytoplasm. It carries out the reaction (R)-pantothenate + ATP = (R)-4'-phosphopantothenate + ADP + H(+). The protein operates within cofactor biosynthesis; coenzyme A biosynthesis; CoA from (R)-pantothenate: step 1/5. Functionally, catalyzes the phosphorylation of pantothenate (Pan), the first step in CoA biosynthesis. This Rhodococcus opacus (strain B4) protein is Type III pantothenate kinase.